The primary structure comprises 364 residues: GDP-fucose transporter 1 (364 aa).

Helical transmembrane passes span 34–56, 76–98, 111–130, 140–162, 167–185, 195–214, 227–249, and 264–286; these read FVLRALQIALVVSLYWVTSISMV, VTFYQCLVTVLLCKGLSSLATCC, LKVARSVLPLSVVFIGMITF, VAFYNVGRSLTTVFNVLLSYLLL, SFYALLTCSVIIGGFWLGV, SWTGTLFGVLASLCVSLNAI, IWRLTFYNNANACVLFLPLLLAL, and AHFWAMMTLGGLFGFAIGYVTGL. Residues 345 to 364 form a disordered region; that stretch reads MKKTQEEPHPRENEKSNMEV.

This sequence belongs to the TPT transporter family. SLC35C subfamily.

The protein resides in the golgi apparatus membrane. The enzyme catalyses GMP(out) + GDP-beta-L-fucose(in) = GMP(in) + GDP-beta-L-fucose(out). In terms of biological role, antiporter specific for GDP-l-fucose and depending on the concomitant reverse transport of GMP. Involved in GDP-fucose import from the cytoplasm into the Golgi lumen. In Bos taurus (Bovine), this protein is GDP-fucose transporter 1 (SLC35C1).